Consider the following 682-residue polypeptide: DNA-directed RNA polymerase subunit beta' (682 aa).

Positions 69, 71, 87, and 90 each coordinate Zn(2+). D489, D491, and D493 together coordinate Mg(2+).

This sequence belongs to the RNA polymerase beta' chain family. RpoC1 subfamily. In terms of assembly, in plastids the minimal PEP RNA polymerase catalytic core is composed of four subunits: alpha, beta, beta', and beta''. When a (nuclear-encoded) sigma factor is associated with the core the holoenzyme is formed, which can initiate transcription. It depends on Mg(2+) as a cofactor. Zn(2+) serves as cofactor.

Its subcellular location is the plastid. It localises to the chloroplast. It carries out the reaction RNA(n) + a ribonucleoside 5'-triphosphate = RNA(n+1) + diphosphate. Functionally, DNA-dependent RNA polymerase catalyzes the transcription of DNA into RNA using the four ribonucleoside triphosphates as substrates. This chain is DNA-directed RNA polymerase subunit beta', found in Vitis vinifera (Grape).